Consider the following 264-residue polypeptide: Elongation factor Ts (264 aa).

An involved in Mg(2+) ion dislocation from EF-Tu region spans residues 76-79 (TDFV).

This sequence belongs to the EF-Ts family.

It is found in the cytoplasm. In terms of biological role, associates with the EF-Tu.GDP complex and induces the exchange of GDP to GTP. It remains bound to the aminoacyl-tRNA.EF-Tu.GTP complex up to the GTP hydrolysis stage on the ribosome. This chain is Elongation factor Ts, found in Deinococcus deserti (strain DSM 17065 / CIP 109153 / LMG 22923 / VCD115).